A 269-amino-acid polypeptide reads, in one-letter code: Oligoribonuclease, mitochondrial (269 aa).

The 173-residue stretch at 55 to 227 folds into the Exonuclease domain; it reads LVWIDCEMTG…SDIKESIAQL (173 aa). Residue Y184 is part of the active site. Residues 240 to 269 form a disordered region; the sequence is ETESVESIGSEQPESPSSSTSSLKRQRTDF. A compositionally biased stretch (low complexity) spans 245–261; it reads ESIGSEQPESPSSSTSS.

Belongs to the oligoribonuclease family.

The protein localises to the mitochondrion. 3'-to-5' exoribonuclease specific for small oligoribonucleotides. The polypeptide is Oligoribonuclease, mitochondrial (REX2) (Saccharomyces cerevisiae (strain ATCC 204508 / S288c) (Baker's yeast)).